Consider the following 170-residue polypeptide: Tubulin polymerization-promoting protein family member 2 (170 aa).

The span at 105-117 shows a compositional bias: low complexity; it reads TTGVTKSTTVGGV. Residues 105–170 are disordered; sequence TTGVTKSTTV…GAGTYDKKNQ (66 aa). Basic and acidic residues predominate over residues 129–149; sequence THKERFDESGKGKGIEGREET.

Belongs to the TPPP family. As to expression, only expressed in male reproductive organs, including testis. Expressed in elongating spermatids at stages IV-VIII of the seminiferous epithelial cycle in testis and in mature sperm in the epididymis.

The protein localises to the cytoplasm. It is found in the cytosol. Its subcellular location is the cell projection. It localises to the cilium. The protein resides in the flagellum. Probable regulator of microtubule dynamics required for sperm motility. In contrast to other members of the family, has no microtubule bundling activity. This chain is Tubulin polymerization-promoting protein family member 2, found in Mus musculus (Mouse).